The sequence spans 96 residues: MSRISIEEVKHVAHLARLAITDEEAAMFTEQLDSIISFAEELNEVDTENVKPTTHVLQMKNIMREDVPDKGLPVEDVVKNAPDHKDGYIRVPSILD.

It belongs to the GatC family. Heterotrimer of A, B and C subunits.

The catalysed reaction is L-glutamyl-tRNA(Gln) + L-glutamine + ATP + H2O = L-glutaminyl-tRNA(Gln) + L-glutamate + ADP + phosphate + H(+). It catalyses the reaction L-aspartyl-tRNA(Asn) + L-glutamine + ATP + H2O = L-asparaginyl-tRNA(Asn) + L-glutamate + ADP + phosphate + 2 H(+). In terms of biological role, allows the formation of correctly charged Asn-tRNA(Asn) or Gln-tRNA(Gln) through the transamidation of misacylated Asp-tRNA(Asn) or Glu-tRNA(Gln) in organisms which lack either or both of asparaginyl-tRNA or glutaminyl-tRNA synthetases. The reaction takes place in the presence of glutamine and ATP through an activated phospho-Asp-tRNA(Asn) or phospho-Glu-tRNA(Gln). The polypeptide is Aspartyl/glutamyl-tRNA(Asn/Gln) amidotransferase subunit C (Bacillus licheniformis (strain ATCC 14580 / DSM 13 / JCM 2505 / CCUG 7422 / NBRC 12200 / NCIMB 9375 / NCTC 10341 / NRRL NRS-1264 / Gibson 46)).